Reading from the N-terminus, the 161-residue chain is PRS fimbrial major pilin protein (161 aa).

The protein belongs to the fimbrial protein family.

It localises to the secreted. It is found in the fimbrium. In terms of biological role, fimbriae (also called pili), polar filaments radiating from the surface of the bacterium to a length of 0.5-1.5 micrometers and numbering 100-300 per cell, enable bacteria to colonize the epithelium of specific host organs. This is PRS fimbrial major pilin protein (prsA) from Escherichia coli.